A 261-amino-acid chain; its full sequence is Cytochrome c oxidase subunit 3 (261 aa).

At 1–15 the chain is on the mitochondrial matrix side; sequence MTHQTHAYHMVNPSP. Residues 16–34 traverse the membrane as a helical segment; that stretch reads WPLTGALSALLMTSGLIMW. Residues 35-40 lie on the Mitochondrial intermembrane side of the membrane; that stretch reads FHFNST. The chain crosses the membrane as a helical span at residues 41–66; that stretch reads TLLMLGLTTNMLTMYQWWRDVVREST. Residues 67-72 lie on the Mitochondrial matrix side of the membrane; that stretch reads FQGHHT. A helical transmembrane segment spans residues 73 to 105; the sequence is PNVQKGLRYGMILFIISEVLFFTGFFWAFYHSS. Over 106-128 the chain is Mitochondrial intermembrane; that stretch reads LAPTPELGGCWPPTGINPLNPLE. Residues 129–152 traverse the membrane as a helical segment; it reads VPLLNTSVLLASGVSITWAHHSLM. Topologically, residues 153–155 are mitochondrial matrix; the sequence is EGN. A helical membrane pass occupies residues 156-183; it reads RNHMLQALFITIALGVYFTLLQASEYYE. The Mitochondrial intermembrane segment spans residues 184–190; it reads APFTISD. A helical membrane pass occupies residues 191 to 223; the sequence is GVYGSTFFVATGFHGLHVIIGSTFLIVCFFRQL. At 224 to 232 the chain is on the mitochondrial matrix side; it reads KFHFTSNHH. Residues 233-256 traverse the membrane as a helical segment; sequence FGFEAAAWYWHFVDVVWLFLYVSI. The Mitochondrial intermembrane portion of the chain corresponds to 257–261; that stretch reads YWWGS.

The protein belongs to the cytochrome c oxidase subunit 3 family. Component of the cytochrome c oxidase (complex IV, CIV), a multisubunit enzyme composed of 14 subunits. The complex is composed of a catalytic core of 3 subunits MT-CO1, MT-CO2 and MT-CO3, encoded in the mitochondrial DNA, and 11 supernumerary subunits COX4I, COX5A, COX5B, COX6A, COX6B, COX6C, COX7A, COX7B, COX7C, COX8 and NDUFA4, which are encoded in the nuclear genome. The complex exists as a monomer or a dimer and forms supercomplexes (SCs) in the inner mitochondrial membrane with NADH-ubiquinone oxidoreductase (complex I, CI) and ubiquinol-cytochrome c oxidoreductase (cytochrome b-c1 complex, complex III, CIII), resulting in different assemblies (supercomplex SCI(1)III(2)IV(1) and megacomplex MCI(2)III(2)IV(2)).

It is found in the mitochondrion inner membrane. It catalyses the reaction 4 Fe(II)-[cytochrome c] + O2 + 8 H(+)(in) = 4 Fe(III)-[cytochrome c] + 2 H2O + 4 H(+)(out). Its function is as follows. Component of the cytochrome c oxidase, the last enzyme in the mitochondrial electron transport chain which drives oxidative phosphorylation. The respiratory chain contains 3 multisubunit complexes succinate dehydrogenase (complex II, CII), ubiquinol-cytochrome c oxidoreductase (cytochrome b-c1 complex, complex III, CIII) and cytochrome c oxidase (complex IV, CIV), that cooperate to transfer electrons derived from NADH and succinate to molecular oxygen, creating an electrochemical gradient over the inner membrane that drives transmembrane transport and the ATP synthase. Cytochrome c oxidase is the component of the respiratory chain that catalyzes the reduction of oxygen to water. Electrons originating from reduced cytochrome c in the intermembrane space (IMS) are transferred via the dinuclear copper A center (CU(A)) of subunit 2 and heme A of subunit 1 to the active site in subunit 1, a binuclear center (BNC) formed by heme A3 and copper B (CU(B)). The BNC reduces molecular oxygen to 2 water molecules using 4 electrons from cytochrome c in the IMS and 4 protons from the mitochondrial matrix. The polypeptide is Cytochrome c oxidase subunit 3 (MT-CO3) (Gazella leptoceros (Sand gazelle)).